We begin with the raw amino-acid sequence, 526 residues long: Peptide chain release factor 3 (526 aa).

One can recognise a tr-type G domain in the interval 8-277; that stretch reads NKRRTFAIIS…GLTQWAPAPQ (270 aa). Residues 17–24, 85–89, and 139–142 contribute to the GTP site; these read SHPDAGKT, DTPGH, and NKLD.

This sequence belongs to the TRAFAC class translation factor GTPase superfamily. Classic translation factor GTPase family. PrfC subfamily.

The protein resides in the cytoplasm. Functionally, increases the formation of ribosomal termination complexes and stimulates activities of RF-1 and RF-2. It binds guanine nucleotides and has strong preference for UGA stop codons. It may interact directly with the ribosome. The stimulation of RF-1 and RF-2 is significantly reduced by GTP and GDP, but not by GMP. This Histophilus somni (strain 2336) (Haemophilus somnus) protein is Peptide chain release factor 3.